Consider the following 316-residue polypeptide: Phosphate acyltransferase (316 aa).

Belongs to the PlsX family. In terms of assembly, homodimer. Probably interacts with PlsY.

It is found in the cytoplasm. The enzyme catalyses a fatty acyl-[ACP] + phosphate = an acyl phosphate + holo-[ACP]. It functions in the pathway lipid metabolism; phospholipid metabolism. In terms of biological role, catalyzes the reversible formation of acyl-phosphate (acyl-PO(4)) from acyl-[acyl-carrier-protein] (acyl-ACP). This enzyme utilizes acyl-ACP as fatty acyl donor, but not acyl-CoA. The sequence is that of Phosphate acyltransferase from Chlamydia felis (strain Fe/C-56) (Chlamydophila felis).